We begin with the raw amino-acid sequence, 407 residues long: Shaggy-related protein kinase GSK1 (407 aa).

The span at 1-19 (MEAPPGPEPMELDAPPPPA) shows a compositional bias: pro residues. Positions 1–21 (MEAPPGPEPMELDAPPPPAAV) are disordered. A Protein kinase domain is found at 68–352 (YMAERVVGTG…ALDACAHSFF (285 aa)). ATP is bound by residues 74–82 (VGTGSFGIV) and K97. D193 acts as the Proton acceptor in catalysis.

It belongs to the protein kinase superfamily. CMGC Ser/Thr protein kinase family. GSK-3 subfamily. Interacts with LIC. Highly expressed in the entire young panicles, spikelets, awns, vascular bundles of palea and lemma, stigma and rachilla. Expressed in root tips, root hairs, lamina joint in the collar region, vascular bundles of coleoptiles.

The catalysed reaction is L-seryl-[protein] + ATP = O-phospho-L-seryl-[protein] + ADP + H(+). It carries out the reaction L-threonyl-[protein] + ATP = O-phospho-L-threonyl-[protein] + ADP + H(+). Functionally, probable serine-threonine kinase that may act as a negative regulator of brassinosteroid (BR) signaling during flower development. May have physiological roles in stress signal-transduction pathways. Phosphorylates LIC in response to BR perception. This chain is Shaggy-related protein kinase GSK1, found in Oryza sativa subsp. japonica (Rice).